We begin with the raw amino-acid sequence, 141 residues long: Pheromone-binding protein-related protein 6 (141 aa).

The N-terminal stretch at 1–16 (MVKYPLILLLIGCAAA) is a signal peptide. Disulfide bonds link Cys41-Cys72, Cys68-Cys120, and Cys111-Cys129.

It belongs to the PBP/GOBP family. Antenna. Mostly expressed in two types of sensory hairs, sensilla trichodea and small sensilla basiconica, in the ventro-lateral region of the third antennal segment (at protein level).

It localises to the secreted. In Drosophila melanogaster (Fruit fly), this protein is Pheromone-binding protein-related protein 6 (Obp83b).